The sequence spans 101 residues: Omega-scoloptoxin(10)-Ssd1b (101 aa).

Residues 1–23 (MNKLTIIFFTILLLTYIIVEKEA) form the signal peptide.

Post-translationally, contains 3 disulfide bonds. As to expression, expressed by the venom gland.

The protein resides in the secreted. In terms of biological role, voltage-gated calcium channel inhibitor. The polypeptide is Omega-scoloptoxin(10)-Ssd1b (Scolopendra dehaani (Thai centipede)).